A 553-amino-acid chain; its full sequence is Undecaprenyl phosphate-alpha-4-amino-4-deoxy-L-arabinose arabinosyl transferase 2 (553 aa).

Helical transmembrane passes span 6–26 (ASKI…LFPL), 85–105 (FAVR…IYLL), 115–135 (VAFV…VGTY), 137–157 (VLDP…FWAL), 178–198 (MAFM…MIPV), 208–228 (MLLY…PWVL), 261–281 (FWYY…LLPG), 295–315 (ELFF…IAKG), 317–337 (LPTY…KYGV), 352–372 (GYIN…IQLV), 386–406 (WVLA…CSTL), and 410–430 (HWLW…QAIP).

The protein belongs to the glycosyltransferase 83 family.

The protein localises to the cell inner membrane. The enzyme catalyses 4-amino-4-deoxy-alpha-L-arabinopyranosyl di-trans,octa-cis-undecaprenyl phosphate + lipid IVA = lipid IIA + di-trans,octa-cis-undecaprenyl phosphate.. It participates in lipopolysaccharide metabolism; 4-amino-4-deoxy-beta-L-arabinose-lipid A biosynthesis. Catalyzes the transfer of the L-Ara4N moiety of the glycolipid undecaprenyl phosphate-alpha-L-Ara4N to lipid A. The modified arabinose is attached to lipid A and is required for resistance to polymyxin and cationic antimicrobial peptides. This Proteus mirabilis (strain HI4320) protein is Undecaprenyl phosphate-alpha-4-amino-4-deoxy-L-arabinose arabinosyl transferase 2.